A 317-amino-acid chain; its full sequence is Dehydrogenase/reductase SDR family protein 7-like (317 aa).

Topologically, residues 1–10 (MKNLAERSAG) are cytoplasmic. The helical; Signal-anchor for type II membrane protein transmembrane segment at 11–31 (SLYWWLLATLFLPIAIPGLVL) threads the bilayer. Residues 32–317 (KLLTMMKEQR…KKRAEKLNST (286 aa)) lie on the Peroxisomal side of the membrane. NAD(+) is bound at residue 52-76 (LITGASSGLGEALAHSFFLAGCKVV). S189 serves as a coordination point for substrate. Y202 functions as the Proton acceptor in the catalytic mechanism.

This sequence belongs to the short-chain dehydrogenases/reductases (SDR) family.

The protein localises to the peroxisome membrane. Putative oxidoreductase. This chain is Dehydrogenase/reductase SDR family protein 7-like, found in Anopheles gambiae (African malaria mosquito).